We begin with the raw amino-acid sequence, 432 residues long: Monooxygenase penA (432 aa).

The chain crosses the membrane as a helical span at residues 7–29; that stretch reads FKIAIIGAGPAGLTLASLLTASP. N-linked (GlcNAc...) asparagine glycosylation occurs at Asn33.

This sequence belongs to the aromatic-ring hydroxylase family. It depends on FAD as a cofactor.

The protein localises to the membrane. It functions in the pathway secondary metabolite biosynthesis. It participates in alkaloid biosynthesis. The protein operates within mycotoxin biosynthesis. Its function is as follows. Monooxygenase; part of the gene cluster that mediates the biosynthesis of penigequinolones, potent insecticidal alkaloids that contain a highly modified 10-carbon prenyl group. The first stage is catalyzed by the nonribosomal peptide synthetase penN that condenses anthranilic acid and O-methyl-L-tyrosine to produce 4'-methoxycyclopeptin. 4'-methoxycyclopeptin is then converted to 4'-methoxydehydrocyclopeptin by the ketoglutarate-dependent dioxygenase penM through dehydrogenation to form a double bond between C-alpha and C-beta of the O-methyltyrosine side chain. PenM also converts its first product methoxydehydrocyclopeptin to 4'-methoxycyclopenin. The following conversion of 4'methoxycyclopenin into 4'-methoxyviridicatin is catalyzed by the cyclopenase penL. 4'-methoxyviridicatin is the precursor of quinolone natural products, and is further converted to quinolinone B. The prenyltransferase penI then catalyzes the canonical Friedel-Crafts alkylation of quinolinone B with dimethylallyl cation to yield dimethylallyl quinolone, which is subjected to FAD-dependent dehydrogenation by the FAD-linked oxidoreductase penH to yield conjugated aryl diene. The delta(3') double bond then serves as the site of the second alkylation with DMAPP catalyzed by the prenyltransferase penG to yield a carbenium ion intermediate, which can be attacked by H(2)O to yield a styrenyl quinolone containing a C3'-hydroxyprenyl chain, or undergo cyclization to yield yaequinolones J1 and J2. The conversion of the styrenyl quinolone into the tetrahydrofuran-containing yaequinolone C is performed by the FAD-dependent monooxygenase penE and involves epoxidation of the terminal C7'-C8' olefin, followed by epoxide ring opening initiated by the C3' hydroxyl group. The predicted cysteine hydrolase penJ acts as an epoxide hydrolase that enhances the rate of the 5-exo-tet cyclization step, increasing the yield of yaequinolone C. PenF catalyzes the cationic rearrangement of the epoxide formed by penE (before ring opening to produce yaequinolone C) into yaequinolone D. Finally, the short-chain dehydrogenase/reductase (SDR)-like reductase penD, catalyzes both the dehydration of yaequinolone D and the reduction of the resulting oxonium to yield penigequinolone. In Penicillium thymicola, this protein is Monooxygenase penA.